Here is a 354-residue protein sequence, read N- to C-terminus: Envelope protein US28 (354 aa).

Over 1 to 37 the chain is Extracellular; sequence MTPTTTTAELTTEFDYDEDATPCVFTDVLNQSKPVTL. N-linked (GlcNAc...) asparagine; by host glycosylation occurs at asparagine 30. Residues 38–58 form a helical membrane-spanning segment; the sequence is FLYGVVFLFGSIGNFLVIFTI. Residues 59–69 lie on the Cytoplasmic side of the membrane; that stretch reads TWRRRIQCSGD. A helical transmembrane segment spans residues 70 to 90; the sequence is VYFINLAAADLLFVCTLPLWM. At 91–101 the chain is on the extracellular side; it reads QYLLDHNSLAS. A helical transmembrane segment spans residues 102–122; that stretch reads VPCTLLTACFYVAMFASLCFI. The Cytoplasmic segment spans residues 123 to 145; it reads TEIALDRYYAIVYMRYRPVKQAC. Residues 146–166 traverse the membrane as a helical segment; the sequence is LFSIFWWIFAVIIAIPHFMVV. Over 167-183 the chain is Extracellular; it reads TKKDNQCMTDYDYLEVS. The helical transmembrane segment at 184 to 204 threads the bilayer; that stretch reads YPIILNVELMLGAFVIPLSVI. Residues 205 to 228 are Cytoplasmic-facing; the sequence is SYCYYRISRIVAVSQSRHKGRIVR. The helical transmembrane segment at 229–249 threads the bilayer; that stretch reads VLIAVVLVFIIFWLPYHLTLF. The Extracellular segment spans residues 250–273; it reads VDTLKLLKWISSSCEFERSLKRAL. A helical transmembrane segment spans residues 274-294; the sequence is ILTESLAFCHCCLNPLLYVFV. Over 295–354 the chain is Cytoplasmic; it reads GTKFRQELHCLLAEFRQRLFSRDVSWYHSMSFSRRGSPSRRETSSDTLSDEVCRVSQIIP.

The protein belongs to the G-protein coupled receptor 1 family. As to quaternary structure, interacts with host GPRASP1; this interaction targets US28 to lysosomes for degradation. Interacts with host CX3CL1/Fractalkine (via N-terminus). In terms of processing, phosphorylated. High phosphorylation occurs concomitantly with receptor endocytosis and correlate with low receptor presence at the plasma membrane.

It is found in the host cell membrane. Functionally, receptor for a C-C type chemokine. Binds to a great number of different CC-chemokines including CCL5/RANTES, CCL2/MCP-1, CCL3/MIP-1-alpha as well as CX3CL1/Fractalkine. Transduces signals resulting in the activation of MAP kinase signaling pathways and augmentation of intracellular calcium ion levels, leading to alterations in chemotactic behavior of vascular smooth muscle cells and macrophages. The US28 receptor also exhibits high levels of agonist-independent signaling activity and agonist-independent endocytosis. Interacts with the host Gi complex without activating it, thereby probably interfering with the chemokine-Gi signaling. May also function as a G protein sink to sequester G protein from the cell surface via internalization. Interacts with endogenous Gaq/11 subunits and thereby constitutively activates phospholipase C. The chain is Envelope protein US28 (US28) from Human cytomegalovirus (strain Merlin) (HHV-5).